Consider the following 330-residue polypeptide: Phenylalanine--tRNA ligase alpha subunit (330 aa).

Residue glutamate 255 participates in Mg(2+) binding.

It belongs to the class-II aminoacyl-tRNA synthetase family. Phe-tRNA synthetase alpha subunit type 1 subfamily. Tetramer of two alpha and two beta subunits. Mg(2+) serves as cofactor.

It is found in the cytoplasm. The catalysed reaction is tRNA(Phe) + L-phenylalanine + ATP = L-phenylalanyl-tRNA(Phe) + AMP + diphosphate + H(+). The chain is Phenylalanine--tRNA ligase alpha subunit from Acinetobacter baumannii (strain AYE).